We begin with the raw amino-acid sequence, 253 residues long: MMPILVTLNKISVTFGSRRVLNDISLSLRPGKILTLLGPNGAGKSTLVRVVLGLIPPSSGSLVREPGLRIGYVPQKLHLDATLPLTVSRFMRLKPGVKKADILPALTRVQAAHLLDQPMQKLSGGENQRVLLARALLNRPQLLVLDEPTQGVDVNGQLALYDLIEQLRKELGCAVLMVSHDLHLVMAKTDEVLCLNQHICCSGAPEVISTHPEFIAMFGNRGAEQLAVYRHNHNHRHDLHGKIILKNSGSRGA.

One can recognise an ABC transporter domain in the interval 6–227 (VTLNKISVTF…FGNRGAEQLA (222 aa)). Residue 38-45 (GPNGAGKS) coordinates ATP.

It belongs to the ABC transporter superfamily. Zinc importer (TC 3.A.1.15.5) family. The complex is composed of two ATP-binding proteins (ZnuC), two transmembrane proteins (ZnuB) and a solute-binding protein (ZnuA).

It is found in the cell inner membrane. It carries out the reaction Zn(2+)(out) + ATP(in) + H2O(in) = Zn(2+)(in) + ADP(in) + phosphate(in) + H(+)(in). Functionally, part of the ABC transporter complex ZnuABC involved in zinc import. Responsible for energy coupling to the transport system. This Yersinia pseudotuberculosis serotype I (strain IP32953) protein is Zinc import ATP-binding protein ZnuC.